A 131-amino-acid polypeptide reads, in one-letter code: MSKKQNSSISRKKIKRQILEGIAHIHASFNNTIVTITDRQGNTLGWATSGGSGFRGSRKSTPFAAQVAAEKCSEIAKEYGIKNLEIMVKGPGPGRESTIRALNSSGFKITNITDVTPIPHNGCRPPKRRRV.

It belongs to the universal ribosomal protein uS11 family. As to quaternary structure, part of the 30S ribosomal subunit. Interacts with proteins S7 and S18. Binds to IF-3.

Its function is as follows. Located on the platform of the 30S subunit, it bridges several disparate RNA helices of the 16S rRNA. Forms part of the Shine-Dalgarno cleft in the 70S ribosome. In Wigglesworthia glossinidia brevipalpis, this protein is Small ribosomal subunit protein uS11.